A 476-amino-acid chain; its full sequence is Methylenetetrahydrofolate--tRNA-(uracil-5-)-methyltransferase TrmFO (476 aa).

13 to 18 (GGGLAG) provides a ligand contact to FAD. The tract at residues 425 to 446 (PPLESPPTHGADGKKLRGPDKT) is disordered. The segment covering 435–446 (ADGKKLRGPDKT) has biased composition (basic and acidic residues).

Belongs to the MnmG family. TrmFO subfamily. It depends on FAD as a cofactor.

The protein resides in the cytoplasm. The catalysed reaction is uridine(54) in tRNA + (6R)-5,10-methylene-5,6,7,8-tetrahydrofolate + NADH + H(+) = 5-methyluridine(54) in tRNA + (6S)-5,6,7,8-tetrahydrofolate + NAD(+). The enzyme catalyses uridine(54) in tRNA + (6R)-5,10-methylene-5,6,7,8-tetrahydrofolate + NADPH + H(+) = 5-methyluridine(54) in tRNA + (6S)-5,6,7,8-tetrahydrofolate + NADP(+). Functionally, catalyzes the folate-dependent formation of 5-methyl-uridine at position 54 (M-5-U54) in all tRNAs. The chain is Methylenetetrahydrofolate--tRNA-(uracil-5-)-methyltransferase TrmFO from Rhodopseudomonas palustris (strain BisB18).